The following is a 627-amino-acid chain: Neuronal acetylcholine receptor subunit alpha-4 (627 aa).

The N-terminal stretch at Met-1–Pro-31 is a signal peptide. Residues Val-32 to Leu-244 are Extracellular-facing. A glycan (N-linked (GlcNAc...) asparagine) is linked at Asn-59. Val-78 and Glu-80 together coordinate Ca(2+). N-linked (GlcNAc...) asparagine glycosylation is found at Asn-109 and Asn-176. Intrachain disulfides connect Cys-163/Cys-177 and Cys-227/Cys-228. A helical membrane pass occupies residues Pro-245–Leu-269. Residue Cys-273 is the site of S-palmitoyl cysteine attachment. The next 2 membrane-spanning stretches (helical) occupy residues Val-277–Thr-295 and Tyr-311–Val-332. Topologically, residues His-333–Arg-600 are cytoplasmic. Low complexity predominate over residues Pro-384–Gly-399. Residues Pro-384–Leu-463 form a disordered region. Phosphoserine is present on Ser-427. A compositionally biased stretch (pro residues) spans Ser-444–Thr-458. Position 541 is a phosphoserine (Ser-541). The helical transmembrane segment at Ile-601–Leu-619 threads the bilayer.

Belongs to the ligand-gated ion channel (TC 1.A.9) family. Acetylcholine receptor (TC 1.A.9.1) subfamily. Alpha-4/CHRNA4 sub-subfamily. In terms of assembly, neuronal AChR is composed of two different types of subunits: alpha and beta. CHRNA4 forms heteropentameric neuronal acetylcholine receptors with CHRNB2 and CHRNB4, as well as CHRNA5 and CHRNB3 as accesory subunits. Found in two major stoichiometric forms, LS (low agonist sensitivity): (CHRNA4)3:(CHRNB2)2 and HS (high agonist sensitivity): (CHRNA4)2:(CHRNB2)3, the two stoichiometric forms differ in their unitary conductance, calcium permeability, ACh sensitivity and potentiation by divalent cation. Cells produce predominantly an (CHRNA4)3:(CHRNB2)2 nAChR. The (CHRNA4)2:(CHRNB2)3 expression is selectively up-regulated by nicotine and has lower single channel conductance and calcium permeability. In the striatum, also forms CHRNA4:CHRNA6:CHRNB2 complexes. Also found in the stoichiometric form: (CHRNA4:CHRNB2)2:CHRNB3. Interacts with RIC3; which is required for proper folding and assembly. Interacts with LYPD6.

The protein resides in the synaptic cell membrane. It localises to the cell membrane. The catalysed reaction is Ca(2+)(in) = Ca(2+)(out). It catalyses the reaction K(+)(in) = K(+)(out). It carries out the reaction Na(+)(in) = Na(+)(out). Its activity is regulated as follows. Activated by a myriad of ligands such as acetylcholine, cytisine, nicotine, choline and epibatidine. Channel potentiation by calcium is stoichiometry-selective, CHRNA4:CHRNB2 nACh receptor is achieved by calcium association with topographically distinct sites framed by anionic residues within the CHRNA4 subunit and between the CHRNA4 and CHRNB2 subunits. nAChR activity is inhibited by the antagonist alpha-conotoxins BuIA, PnIA, GID and MII, small disulfide-constrained peptides from cone snails. Its function is as follows. Component of neuronal acetylcholine receptors (nAChRs) that function as pentameric, ligand-gated cation channels with high calcium permeability among other activities. nAChRs are excitatory neurotrasnmitter receptors formed by a collection of nAChR subunits known to mediate synaptic transmission in the nervous system and the neuromuscular junction. Each nAchR subunit confers differential attributes to channel properties, including activation, deactivation and desensitization kinetics, pH sensitivity, cation permeability, and binding to allosteric modulators. CHRNA4 forms heteropentameric neuronal acetylcholine receptors with CHRNB2 and CHRNB4, as well as CHRNA5 and CHRNB3 as accesory subunits. Is the most abundant nAChR subtype expressed in the central nervous system. Found in two major stoichiometric forms,(CHRNA4)3:(CHRNB2)2 and (CHRNA4)2:(CHRNB2)3, the two stoichiometric forms differ in their unitary conductance, calcium permeability, ACh sensitivity and potentiation by divalent cation. Involved in the modulation of calcium-dependent signaling pathways, influences the release of neurotransmitters, including dopamine, glutamate and GABA. In Mustela putorius furo (European domestic ferret), this protein is Neuronal acetylcholine receptor subunit alpha-4 (CHRNA4).